The following is a 68-amino-acid chain: Small ribosomal subunit protein bS21 (68 aa).

Residues 35–68 (HYEKPSEKRARERAAAVRRARKMERKRMERDGIK) are disordered. Basic and acidic residues predominate over residues 37 to 49 (EKPSEKRARERAA). Over residues 50–59 (AVRRARKMER) the composition is skewed to basic residues.

Belongs to the bacterial ribosomal protein bS21 family.

This is Small ribosomal subunit protein bS21 from Sphingopyxis alaskensis (strain DSM 13593 / LMG 18877 / RB2256) (Sphingomonas alaskensis).